The following is a 440-amino-acid chain: Thymidine phosphorylase (440 aa).

This sequence belongs to the thymidine/pyrimidine-nucleoside phosphorylase family. Homodimer.

The catalysed reaction is thymidine + phosphate = 2-deoxy-alpha-D-ribose 1-phosphate + thymine. It functions in the pathway pyrimidine metabolism; dTMP biosynthesis via salvage pathway; dTMP from thymine: step 1/2. In terms of biological role, the enzymes which catalyze the reversible phosphorolysis of pyrimidine nucleosides are involved in the degradation of these compounds and in their utilization as carbon and energy sources, or in the rescue of pyrimidine bases for nucleotide synthesis. The chain is Thymidine phosphorylase from Proteus mirabilis (strain HI4320).